The sequence spans 259 residues: Glucosamine-6-phosphate deaminase (259 aa).

The Proton acceptor; for enolization step role is filled by Asp66. Asp135 serves as the catalytic For ring-opening step. Catalysis depends on His137, which acts as the Proton acceptor; for ring-opening step. Catalysis depends on Glu142, which acts as the For ring-opening step.

The protein belongs to the glucosamine/galactosamine-6-phosphate isomerase family. NagB subfamily.

It catalyses the reaction alpha-D-glucosamine 6-phosphate + H2O = beta-D-fructose 6-phosphate + NH4(+). It participates in amino-sugar metabolism; N-acetylneuraminate degradation; D-fructose 6-phosphate from N-acetylneuraminate: step 5/5. Catalyzes the reversible isomerization-deamination of glucosamine 6-phosphate (GlcN6P) to form fructose 6-phosphate (Fru6P) and ammonium ion. In Pseudarthrobacter chlorophenolicus (strain ATCC 700700 / DSM 12829 / CIP 107037 / JCM 12360 / KCTC 9906 / NCIMB 13794 / A6) (Arthrobacter chlorophenolicus), this protein is Glucosamine-6-phosphate deaminase.